The chain runs to 372 residues: Carbamoyl phosphate synthase small chain (372 aa).

The interval 1 to 184 (MKAYIYLEND…SFQKFNDAKR (184 aa)) is CPSase. The L-glutamine site is built by S45, G240, and G242. Residues 188-372 (KVAVIDYGVK…YIFKEFMNLM (185 aa)) form the Glutamine amidotransferase type-1 domain. The active-site Nucleophile is the C268. The L-glutamine site is built by L269, Q272, N310, and Y313. Catalysis depends on residues H351 and E353.

Belongs to the CarA family. Composed of two chains; the small (or glutamine) chain promotes the hydrolysis of glutamine to ammonia, which is used by the large (or ammonia) chain to synthesize carbamoyl phosphate. Tetramer of heterodimers (alpha,beta)4.

The enzyme catalyses hydrogencarbonate + L-glutamine + 2 ATP + H2O = carbamoyl phosphate + L-glutamate + 2 ADP + phosphate + 2 H(+). It carries out the reaction L-glutamine + H2O = L-glutamate + NH4(+). It participates in amino-acid biosynthesis; L-arginine biosynthesis; carbamoyl phosphate from bicarbonate: step 1/1. The protein operates within pyrimidine metabolism; UMP biosynthesis via de novo pathway; (S)-dihydroorotate from bicarbonate: step 1/3. Functionally, small subunit of the glutamine-dependent carbamoyl phosphate synthetase (CPSase). CPSase catalyzes the formation of carbamoyl phosphate from the ammonia moiety of glutamine, carbonate, and phosphate donated by ATP, constituting the first step of 2 biosynthetic pathways, one leading to arginine and/or urea and the other to pyrimidine nucleotides. The small subunit (glutamine amidotransferase) binds and cleaves glutamine to supply the large subunit with the substrate ammonia. The sequence is that of Carbamoyl phosphate synthase small chain from Campylobacter jejuni subsp. jejuni serotype O:2 (strain ATCC 700819 / NCTC 11168).